We begin with the raw amino-acid sequence, 72 residues long: SRY-related protein MG44 (72 aa).

Residues 1-69 (VKRPMNAFMV…KHMADYPNYK (69 aa)) constitute a DNA-binding region (HMG box).

Its subcellular location is the nucleus. In Tarentola mauritanica (Common wall gecko), this protein is SRY-related protein MG44.